The following is a 313-amino-acid chain: Porphobilinogen deaminase (313 aa).

C242 is modified (S-(dipyrrolylmethanemethyl)cysteine).

Belongs to the HMBS family. In terms of assembly, monomer. Dipyrromethane is required as a cofactor.

It catalyses the reaction 4 porphobilinogen + H2O = hydroxymethylbilane + 4 NH4(+). The protein operates within porphyrin-containing compound metabolism; protoporphyrin-IX biosynthesis; coproporphyrinogen-III from 5-aminolevulinate: step 2/4. Functionally, tetrapolymerization of the monopyrrole PBG into the hydroxymethylbilane pre-uroporphyrinogen in several discrete steps. The polypeptide is Porphobilinogen deaminase (Erwinia tasmaniensis (strain DSM 17950 / CFBP 7177 / CIP 109463 / NCPPB 4357 / Et1/99)).